The sequence spans 863 residues: Glycerol-3-phosphate acyltransferase (863 aa).

Residues 1-29 (MPKKNSPLLPKETTTTQSSVDTSGSSNLT) form a disordered region. Residues 12-29 (ETTTTQSSVDTSGSSNLT) are compositionally biased toward polar residues. Residues 343–348 (SHRSHI) carry the HXXXXD motif motif.

It belongs to the GPAT/DAPAT family.

The protein localises to the cell inner membrane. It carries out the reaction sn-glycerol 3-phosphate + an acyl-CoA = a 1-acyl-sn-glycero-3-phosphate + CoA. It functions in the pathway phospholipid metabolism; CDP-diacylglycerol biosynthesis; CDP-diacylglycerol from sn-glycerol 3-phosphate: step 1/3. The polypeptide is Glycerol-3-phosphate acyltransferase (Xylella fastidiosa (strain M12)).